The primary structure comprises 364 residues: F-box protein At1g59680 (364 aa).

The F-box domain occupies 2-49 (TTMSDLSVDLVGEILSRVPLTSLSAVRCTCKSWNTLSKHQIFGKAELA).

This chain is F-box protein At1g59680, found in Arabidopsis thaliana (Mouse-ear cress).